The chain runs to 452 residues: Probable dihydrolipoyllysine-residue succinyltransferase component of 2-oxoglutarate dehydrogenase complex, mitochondrial (452 aa).

The Lipoyl-binding domain maps to 42–117 (STRIKTPPFP…TIDQDIAVID (76 aa)). Position 83 is an N6-lipoyllysine (Lys83). Residues 119 to 225 (SAAPPEGGSA…FSRNEDRVKM (107 aa)) are disordered. Basic and acidic residues-rich tracts occupy residues 130–144 (PKKD…DAAK), 154–170 (KPIE…EQKE), and 195–209 (AKSE…KATE). Active-site residues include His424 and Asp428.

It belongs to the 2-oxoacid dehydrogenase family. (R)-lipoate is required as a cofactor.

The protein resides in the mitochondrion. The enzyme catalyses N(6)-[(R)-dihydrolipoyl]-L-lysyl-[protein] + succinyl-CoA = N(6)-[(R)-S(8)-succinyldihydrolipoyl]-L-lysyl-[protein] + CoA. Its pathway is amino-acid degradation; L-lysine degradation via saccharopine pathway; glutaryl-CoA from L-lysine: step 6/6. The 2-oxoglutarate dehydrogenase complex catalyzes the overall conversion of 2-oxoglutarate to succinyl-CoA and CO(2). It contains multiple copies of three enzymatic components: 2-oxoglutarate dehydrogenase (E1), dihydrolipoamide succinyltransferase (E2) and lipoamide dehydrogenase (E3). This is Probable dihydrolipoyllysine-residue succinyltransferase component of 2-oxoglutarate dehydrogenase complex, mitochondrial (kgd2) from Schizosaccharomyces pombe (strain 972 / ATCC 24843) (Fission yeast).